The chain runs to 196 residues: Retinol-binding protein 4 (196 aa).

The signal sequence occupies residues 1 to 21; sequence MAYTWRALLLLALAFLGSSMA. Disulfide bonds link Cys-25-Cys-181, Cys-91-Cys-195, and Cys-141-Cys-150. Residue Gln-119 coordinates substrate.

This sequence belongs to the calycin superfamily. Lipocalin family. In terms of assembly, interacts with TTR. Interaction with TTR prevents its loss by filtration through the kidney glomeruli. Interacts with STRA6.

The protein resides in the secreted. Its function is as follows. Retinol-binding protein that mediates retinol transport in blood plasma. Delivers retinol from the liver stores to the peripheral tissues. Transfers the bound all-trans retinol to STRA6, that then facilitates retinol transport across the cell membrane. The protein is Retinol-binding protein 4 (RBP4) of Gallus gallus (Chicken).